An 84-amino-acid chain; its full sequence is Large ribosomal subunit protein bL27 (84 aa).

Positions Met1–Gly22 are disordered.

It belongs to the bacterial ribosomal protein bL27 family.

The polypeptide is Large ribosomal subunit protein bL27 (Shewanella denitrificans (strain OS217 / ATCC BAA-1090 / DSM 15013)).